The chain runs to 419 residues: Protein phosphatase methylesterase 1 (419 aa).

The span at 1–12 shows a compositional bias: basic residues; that stretch reads MSQLHRGMHKKP. Residues 1–75 are disordered; it reads MSQLHRGMHK…KSAASPTVPA (75 aa). Residues 32–52 show a composition bias toward acidic residues; that stretch reads TETEETVECTEEEEEQDETDG. Catalysis depends on residues S230, D256, and H383.

It belongs to the AB hydrolase superfamily.

The catalysed reaction is [phosphatase 2A protein]-C-terminal L-leucine methyl ester + H2O = [phosphatase 2A protein]-C-terminal L-leucine + methanol + H(+). Demethylates proteins that have been reversibly carboxymethylated. Demethylates the phosphatase PP2A catalytic subunit. This Yarrowia lipolytica (strain CLIB 122 / E 150) (Yeast) protein is Protein phosphatase methylesterase 1 (PPE1).